The chain runs to 197 residues: MYDYIKGIYKGMHKDYITVENNGIGYKIFTSGNTLYETPEKDEEIKLYIQQIPRDDSINLYGFFTEEERDMFNLLMTISGVGAKSSLSLLSVTSINKLKYSIVTEDTTLLTRAPGIGRKTAERIILELKDKFKNDDIISDIDDLDSISNFQLHSAEALEALMSLGYSQKESEKALKNVDKENSLEDIIKACLKYLMG.

The segment at 1-64 (MYDYIKGIYK…DDSINLYGFF (64 aa)) is domain I. Positions 65–143 (TEEERDMFNL…NDDIISDIDD (79 aa)) are domain II. The segment at 144-154 (LDSISNFQLHS) is flexible linker. The interval 154 to 197 (SAEALEALMSLGYSQKESEKALKNVDKENSLEDIIKACLKYLMG) is domain III.

The protein belongs to the RuvA family. As to quaternary structure, homotetramer. Forms an RuvA(8)-RuvB(12)-Holliday junction (HJ) complex. HJ DNA is sandwiched between 2 RuvA tetramers; dsDNA enters through RuvA and exits via RuvB. An RuvB hexamer assembles on each DNA strand where it exits the tetramer. Each RuvB hexamer is contacted by two RuvA subunits (via domain III) on 2 adjacent RuvB subunits; this complex drives branch migration. In the full resolvosome a probable DNA-RuvA(4)-RuvB(12)-RuvC(2) complex forms which resolves the HJ.

The protein localises to the cytoplasm. The RuvA-RuvB-RuvC complex processes Holliday junction (HJ) DNA during genetic recombination and DNA repair, while the RuvA-RuvB complex plays an important role in the rescue of blocked DNA replication forks via replication fork reversal (RFR). RuvA specifically binds to HJ cruciform DNA, conferring on it an open structure. The RuvB hexamer acts as an ATP-dependent pump, pulling dsDNA into and through the RuvAB complex. HJ branch migration allows RuvC to scan DNA until it finds its consensus sequence, where it cleaves and resolves the cruciform DNA. The sequence is that of Holliday junction branch migration complex subunit RuvA from Clostridium tetani (strain Massachusetts / E88).